Consider the following 348-residue polypeptide: Ferredoxin--NADP reductase (348 aa).

Residues Thr-26, Glu-45, Gln-53, Tyr-58, Ala-98, Phe-133, Asp-299, and Ser-340 each contribute to the FAD site.

The protein belongs to the ferredoxin--NADP reductase type 2 family. In terms of assembly, homodimer. The cofactor is FAD.

It catalyses the reaction 2 reduced [2Fe-2S]-[ferredoxin] + NADP(+) + H(+) = 2 oxidized [2Fe-2S]-[ferredoxin] + NADPH. The chain is Ferredoxin--NADP reductase from Prosthecochloris aestuarii (strain DSM 271 / SK 413).